We begin with the raw amino-acid sequence, 907 residues long: Polyphosphoinositide phosphatase (907 aa).

The SAC domain occupies 154–547; it reads FQNVDLSSNF…GDTLSLQYGG (394 aa). The interval 707–790 is disordered; it reads GIDPSPFTVR…MTDTGDSAKA (84 aa). Acidic residues predominate over residues 758–770; sequence SEDDSGTDREDEG.

Component of the PI(3,5)P2 regulatory complex/PAS complex, at least composed of PIKFYVE, FIG4 and VAC14. VAC14 nucleates the assembly of the complex and serves as a scaffold by pentamerizing into a star-shaped structure, which can bind a single copy each of PIKFYVE and FIG4 and coordinates their activities. As to expression, wide-spread.

It is found in the endosome membrane. It carries out the reaction a 1,2-diacyl-sn-glycero-3-phospho-(1D-myo-inositol-3,5-bisphosphate) + H2O = a 1,2-diacyl-sn-glycero-3-phospho-(1D-myo-inositol-3-phosphate) + phosphate. It catalyses the reaction a 1,2-diacyl-sn-glycero-3-phospho-(1D-myo-inositol-4,5-bisphosphate) + H2O = a 1,2-diacyl-sn-glycero-3-phospho-(1D-myo-inositol 4-phosphate) + phosphate. The enzyme catalyses a 1,2-diacyl-sn-glycero-3-phospho-(1D-myo-inositol-3,4,5-trisphosphate) + H2O = a 1,2-diacyl-sn-glycero-3-phospho-(1D-myo-inositol-3,4-bisphosphate) + phosphate. The catalysed reaction is O-phospho-L-seryl-[protein] + H2O = L-seryl-[protein] + phosphate. In terms of biological role, the PI(3,5)P2 regulatory complex regulates both the synthesis and turnover of phosphatidylinositol 3,5-bisphosphate (PtdIns(3,5)P2). In vitro, hydrolyzes all three D5-phosphorylated polyphosphoinositide substrates in the order PtdIns(4,5)P2 &gt; PtdIns(3,5)P2 &gt; PtdIns(3,4,5)P3. Plays a role in the biogenesis of endosome carrier vesicles (ECV) / multivesicular bodies (MVB) transport intermediates from early endosomes. Dual specificity phosphatase component of the PI(3,5)P2 regulatory complex which regulates both the synthesis and turnover of phosphatidylinositol 3,5-bisphosphate (PtdIns(3,5)P2). Catalyzes the dephosphorylation of phosphatidylinositol 3,5-bisphosphate (PtdIns(3,5)P2) to form phosphatidylinositol 3-phosphate. Has serine-protein phosphatase activity acting on PIKfyve to stimulate its lipid kinase activity, its catalytically activity being required for maximal PI(3,5)P2 production. In vitro, hydrolyzes all three D5-phosphorylated polyphosphoinositide and although displaying preferences for PtdIns(3,5)P2, it is capable of hydrolyzing PtdIns(3,4,5)P3 and PtdIns(4,5)P2, at least in vitro. The sequence is that of Polyphosphoinositide phosphatase (Fig4) from Mus musculus (Mouse).